A 479-amino-acid polypeptide reads, in one-letter code: Sodium-coupled neutral amino acid transporter 5 (479 aa).

The Cytoplasmic segment spans residues 1-61 (MAISCAVGME…LDFEGKTSFG (61 aa)). Residues 62–84 (MSVFNLSNAIMGSGILGLAYAMA) traverse the membrane as a helical segment. The Extracellular portion of the chain corresponds to 85–97 (HTGVIFFLALLLC). A helical transmembrane segment spans residues 98–118 (IALLSSYSIHLLLTCASVVGI). The Cytoplasmic portion of the chain corresponds to 119–135 (RAYEQLGQRAFGPAGKV). Residues 136–156 (VVAIIICLHNVGAMSSYLFII) traverse the membrane as a helical segment. Residues 157-176 (KSELPLVIGTFLHMDPEGDW) are Extracellular-facing. A helical membrane pass occupies residues 177–197 (FLKGNLLIILVSLLIILPLAL). Residues 198 to 202 (MKHLG) are Cytoplasmic-facing. The helical transmembrane segment at 203–223 (YLGYTSSLSLTCMLFFLISVI) threads the bilayer. The Extracellular portion of the chain corresponds to 224 to 264 (YKKFQIGCDVSHNDTVVEAEQAPLQAFNSSCEAELFTVDSQ). Cys-231 and Cys-254 are joined by a disulfide. Asn-236 is a glycosylation site (N-linked (GlcNAc...) asparagine). The chain crosses the membrane as a helical span at residues 265–285 (MSYTVPIMAFAFVCHPEVLPI). At 286–302 (YTELCRPTQRRMQAVAN) the chain is on the cytoplasmic side. A helical membrane pass occupies residues 303–323 (MSIGAMFIMYGLTATFGYLTF). Topologically, residues 324–341 (YSTVKAEMLEMYTQEDML) are extracellular. The helical transmembrane segment at 342–362 (ILCVRLAVLLAVTLTVPVVLF) threads the bilayer. Topologically, residues 363-383 (PIRRALQQLLFPSKAFSWLRH) are cytoplasmic. A helical membrane pass occupies residues 384–404 (VAIALILLILVNILVICVPTI). Topologically, residues 405-406 (RD) are extracellular. The chain crosses the membrane as a helical span at residues 407-427 (IFGFIGSTSAPSLIFILPSVF). At 428–446 (YLRIVPTEVEPLFSWPKIQ) the chain is on the cytoplasmic side. The chain crosses the membrane as a helical span at residues 447–467 (ALCFGVLGVLFMAISLGFMFA). The Extracellular portion of the chain corresponds to 468 to 479 (NWATGQSRMSGH).

It belongs to the amino acid/polyamine transporter 2 family. In terms of tissue distribution, expressed in the ganglion cell layer and the nerve fiber layer (at protein level). Also expreseed in the cells of the inner nuclear layer and in the inner plexiform layer (at protein level). Expressed in Mueller and ganglion retinal cell.

The protein resides in the cell membrane. The catalysed reaction is L-glutamine(out) + Na(+)(out) + H(+)(in) = L-glutamine(in) + Na(+)(in) + H(+)(out). The enzyme catalyses L-serine(out) + Na(+)(out) + H(+)(in) = L-serine(in) + Na(+)(in) + H(+)(out). It catalyses the reaction L-alanine(out) + Na(+)(out) + H(+)(in) = L-alanine(in) + Na(+)(in) + H(+)(out). It carries out the reaction glycine(out) + Na(+)(out) + H(+)(in) = glycine(in) + Na(+)(in) + H(+)(out). The catalysed reaction is L-asparagine(out) + Na(+)(out) + H(+)(in) = L-asparagine(in) + Na(+)(in) + H(+)(out). The enzyme catalyses L-histidine(out) + Na(+)(out) + H(+)(in) = L-histidine(in) + Na(+)(in) + H(+)(out). It catalyses the reaction L-cysteine(out) + Na(+)(out) + H(+)(in) = L-cysteine(in) + Na(+)(in) + H(+)(out). With respect to regulation, not inhibited by lithium. Partial allosteric regulation on ions sodium binding. In terms of biological role, symporter that cotransports neutral amino acids and sodium ions, coupled to an H(+) antiporter activity. Releases L-glutamine and glycine from astroglial cells and may participate in the glutamate/GABA-L-glutamine cycle and the NMDA receptors activation. In addition, contributes significantly to L-glutamine uptake in retina, namely in ganglion and Mueller cells therefore, participates in the retinal glutamate-glutamine cycle. The transport activity is pH sensitive, Li(+) tolerant, bidirectional and associated with large uncoupled fluxes of protons. Moreover functions in both direction and is associated with large uncoupled fluxes of protons. The transport is electroneutral coupled to the cotransport of 1 Na(+) and the antiport of 1 H(+). May have a particular importance for modulation of net hepatic glutamine flux. The sequence is that of Sodium-coupled neutral amino acid transporter 5 from Mus musculus (Mouse).